Here is a 1953-residue protein sequence, read N- to C-terminus: MGVKKKKEMQVAALTICHQDLETLKSFADVEGKNLASLLLHCVQLTDGVSQIHYIKQIVPLLEKADKNGMCDPTIQSCLDILAGIYLSLSLKNPLKKVLASSLNSLPDFFLPEAMHRFTSRLQEELNTTDLYSYRKVTDNISSCMENFNLGRASVNNLLKNVLHFLQKSLIEILEENRKCAGNHIIQTQLMNDLLVGIRVSMMLVQKVQDFQGNLWKTSDSPIWQNMCGLLSIFTKVLSDDDLLQTVQSTSGLAIILFIKTMFHPSEKIPHLISSVLLRSVDCTSVPEWFMSSCRSLCCGDISQSAVLFLCQGTLAMLDWQNGSMGRSGEALLLDTAHVLFTLSSQIKEPTLEMFLSRILASWTNSAIQVLESSSPSLTDSLNGNSSIVGRLLEYVYTHWEHPLDALRHQTKIMFKNLLQMHRLTVEGADFVPDPFFVELTESLLRLEWHIKGKYTCLGCLVECIGVEHILAIDKTIPSQILEVMGDQSLVPYASDLLETMFRNHKSHLKSQTAESSWIDQWHETWVSPLLFILCEGNLDQKSYVIDYYLPKLLSYSPESLQYMVKILQTSIDAKTGQEQSFPSLGSCNSRGALGALMACLRIARAHGHLQSATDTWENLVSDARIKQGLIHQHCQVRIDTLGLLCESNRSTEIVSMEEMQWIQFFITYNLNSQSPGVRQQICSLLKKLFCRIQESSQVLYKLEQSKSKREPENELTKQHPSVSLQQYKNFMSSICNSLFEALFPGSSYSTRFSALTILGSIAEVFHVPEGRIYTVYQLSHDIDVGRFQTLMECFTSTFEDVKILAFDLLMKLSKTAVHFQDSGKLQGLFQAALELSTSTKPYDCVTASYLLNFLIWQDALPSSLSAYLTQQVACDNGDRPAAVVERNTLMVIKCLMENLEEEVSQAENSLLQAAAAFPMYGRVHCITGALQKLSLNSLQLVSEWRPVVEKLLLMSYRLSTVVSPVIQSSSPEGLIPMDTDSESASRLQMILNEIQPRDTNDYFNQAKILKEHDSFDMKDLNASVVNIDTSTEIKGKEVKTCDVTAQMVLVCCWRSMKEVALLLGMLCQLLPMQPVPESSDGLLTVEQVKEIGDYFKQHLLQSRHRGAFELAYTGFVKLTEVLNRCPNVSLQKLPEQWLWSVLEEIKCSDPSSKLCATRRSAGIPFYIQALLASEPKKGRMDLLKITMKELISLAGPTDDIQSTVPQVHALNILRALFRDTRLGENIIPYVADGAKAAILGFTSPVWAVRNSSTLLFSALITRIFGVKRAKDEHSKTNRMTGREFFSRFPELYPFLLKQLETVANTVDSDMGEPNRHPSMFLLLLVLERLYASPMDGTSSALSMGPFVPFIMRCGHSPVYHSREMAARALVPFVMIDHIPNTIRTLLSTLPSCTDQCFRQNHIHGTLLQVFHLLQAYSDSKHGTNSDFQHELTDITVCTKAKLWLAKRQNPCLVTRAVYIDILFLLTCCLNRSAKDNQPVLESLGFWEEVRGIISGSELITGFPWAFKVPGLPQYLQSLTRLAIAAVWAAAAKSGERETNVPISFSQLLESAFPEVRSLTLEALLEKFLAAASGLGEKGVPPLLCNMGEKFLLLAMKENHPECFCKILKILHCMDPGEWLPQTEHCVHLTPKEFLIWTMDIASNERSEIQSVALRLASKVISHHMQTCVENRELIAAELKQWVQLVILSCEDHLPTESRLAVVEVLTSTTPLFLTNPHPILELQDTLALWKCVLTLLQSEEQAVRDAATETVTTAMSQENTCQSTEFAFCQVDASIALALALAVLCDLLQQWDQLAPGLPILLGWLLGESDDLVACVESMHQVEEDYLFEKAEVNFWAETLIFVKYLCKHLFCLLSKSGWRPPSPEMLCHLQRMVSEQCHLLSQFFRELPPAAEFVKTVEFTRLRIQEERTLACLRLLAFLEGKEGEDTLVLSVWDSYAESRQLTLPRTEAAC.

Residues 886–918 (ERNTLMVIKCLMENLEEEVSQAENSLLQAAAAF) are a coiled coil. Phosphoserine is present on residues Ser1015, Ser1024, and Ser1161.

This sequence belongs to the THADA family. As to expression, expressed in pancreas, adrenal medulla, thyroid, adrenal cortex, testis, thymus, small intestine and stomach.

Together with methyltransferase FTSJ1, methylates the 2'-O-ribose of nucleotides at position 32 of the anticodon loop of substrate tRNAs. The sequence is that of tRNA (32-2'-O)-methyltransferase regulator THADA (THADA) from Homo sapiens (Human).